We begin with the raw amino-acid sequence, 103 residues long: Large ribosomal subunit protein bL21 (103 aa).

It belongs to the bacterial ribosomal protein bL21 family. In terms of assembly, part of the 50S ribosomal subunit. Contacts protein L20.

In terms of biological role, this protein binds to 23S rRNA in the presence of protein L20. The chain is Large ribosomal subunit protein bL21 from Azoarcus sp. (strain BH72).